Reading from the N-terminus, the 164-residue chain is Nucleotide-binding protein EF_1165 (164 aa).

This sequence belongs to the YajQ family.

Nucleotide-binding protein. This Enterococcus faecalis (strain ATCC 700802 / V583) protein is Nucleotide-binding protein EF_1165.